The primary structure comprises 347 residues: Sesquiterpene synthase M422DRAFT_47084 (347 aa).

Residues Asp-93, Asn-228, Ser-232, and Glu-236 each coordinate Mg(2+). The DDXXD motif motif lies at Asp-93–Asp-97. 2 residues coordinate (2E,6E)-farnesyl diphosphate: Arg-318 and Tyr-319.

It belongs to the terpene synthase family. Requires Mg(2+) as cofactor.

The enzyme catalyses (2E,6E)-farnesyl diphosphate = viridiflorene + diphosphate. In terms of biological role, terpene cyclase that catalyzes the cyclization of farnesyl diphosphate (FPP) to viridiflorene and viridiflorol. The polypeptide is Sesquiterpene synthase M422DRAFT_47084 (Sphaerobolus stellatus (strain SS14)).